A 317-amino-acid chain; its full sequence is MHNYLDFEKPISDLEGKILELKKLAGEDESVNTSDEVARLEGRVRDAMMEIYSKLSPWQKTQVARHPSRPHFLDYAAELFTEFTPLAGDRNFANDDAIQAGLARFRGAPVAVIGQEKGNDTKSRIKHNFGSPRPEGYRKAVRVMEMADRFGLPLITLVDTAGAYPGVNAEERGQAEAIARSTEMCLNVKVPIVTVVIGEGGSGGAIAIATGNRVYMLEHSIYSVISPEGAASILWRDSTRAKEAASNMKITAEDLKSLGVIDGIIPEPVGGAHRDPQAVIGRTGTVIADALKELSGRNGDELRADRRQKYLNIGRNL.

In terms of domain architecture, CoA carboxyltransferase C-terminal spans 40-293; the sequence is LEGRVRDAMM…GTVIADALKE (254 aa).

The protein belongs to the AccA family. In terms of assembly, acetyl-CoA carboxylase is a heterohexamer composed of biotin carboxyl carrier protein (AccB), biotin carboxylase (AccC) and two subunits each of ACCase subunit alpha (AccA) and ACCase subunit beta (AccD).

The protein localises to the cytoplasm. It carries out the reaction N(6)-carboxybiotinyl-L-lysyl-[protein] + acetyl-CoA = N(6)-biotinyl-L-lysyl-[protein] + malonyl-CoA. Its pathway is lipid metabolism; malonyl-CoA biosynthesis; malonyl-CoA from acetyl-CoA: step 1/1. Its function is as follows. Component of the acetyl coenzyme A carboxylase (ACC) complex. First, biotin carboxylase catalyzes the carboxylation of biotin on its carrier protein (BCCP) and then the CO(2) group is transferred by the carboxyltransferase to acetyl-CoA to form malonyl-CoA. The protein is Acetyl-coenzyme A carboxylase carboxyl transferase subunit alpha of Sinorhizobium fredii (strain NBRC 101917 / NGR234).